The sequence spans 121 residues: DNA-directed RNA polymerase subunit omega (121 aa).

Belongs to the RNA polymerase subunit omega family. As to quaternary structure, the RNAP catalytic core consists of 2 alpha, 1 beta, 1 beta' and 1 omega subunit. When a sigma factor is associated with the core the holoenzyme is formed, which can initiate transcription.

It catalyses the reaction RNA(n) + a ribonucleoside 5'-triphosphate = RNA(n+1) + diphosphate. In terms of biological role, promotes RNA polymerase assembly. Latches the N- and C-terminal regions of the beta' subunit thereby facilitating its interaction with the beta and alpha subunits. In Syntrophobacter fumaroxidans (strain DSM 10017 / MPOB), this protein is DNA-directed RNA polymerase subunit omega.